The sequence spans 426 residues: Putative F-box protein At4g38870 (426 aa).

The F-box domain maps to 47-92 (SVNSELLPVDLIMEILKKLSLKPLIRFLCVSKLWASIIRDPYFMKL).

The polypeptide is Putative F-box protein At4g38870 (Arabidopsis thaliana (Mouse-ear cress)).